We begin with the raw amino-acid sequence, 133 residues long: NAD(P)H-quinone oxidoreductase subunit 3 (133 aa).

The next 3 membrane-spanning stretches (helical) occupy residues 22–44, 77–97, and 102–122; these read YLLG…SRLL, MFAL…PWAV, and LGLL…VGLA.

Belongs to the complex I subunit 3 family. In terms of assembly, NDH-1 can be composed of about 15 different subunits; different subcomplexes with different compositions have been identified which probably have different functions.

Its subcellular location is the cellular thylakoid membrane. The catalysed reaction is a plastoquinone + NADH + (n+1) H(+)(in) = a plastoquinol + NAD(+) + n H(+)(out). The enzyme catalyses a plastoquinone + NADPH + (n+1) H(+)(in) = a plastoquinol + NADP(+) + n H(+)(out). Functionally, NDH-1 shuttles electrons from an unknown electron donor, via FMN and iron-sulfur (Fe-S) centers, to quinones in the respiratory and/or the photosynthetic chain. The immediate electron acceptor for the enzyme in this species is believed to be plastoquinone. Couples the redox reaction to proton translocation, and thus conserves the redox energy in a proton gradient. Cyanobacterial NDH-1 also plays a role in inorganic carbon-concentration. The polypeptide is NAD(P)H-quinone oxidoreductase subunit 3 (Synechococcus sp. (strain ATCC 27144 / PCC 6301 / SAUG 1402/1) (Anacystis nidulans)).